The chain runs to 381 residues: Probable peptidoglycan glycosyltransferase FtsW (381 aa).

9 helical membrane-spanning segments follow: residues 16 to 36, 56 to 76, 80 to 100, 145 to 165, 168 to 188, 191 to 211, 274 to 294, 312 to 332, and 343 to 363; these read LVLLLMVVALTSFGIVMVYSA, LIFALVGCVGALVTMRIDYQL, WAVPLLFVSLILLVLVLIPGI, LLSAGFLPYMVVLMILLGLLL, PDMGAALTLAAVTIIMLFAAG, LIFILGSGMVAMPFVVYLVVH, VIGEELGFIGVIVIIGMFFIL, FLALGIAVLFAIEAVVNMAVV, and LPFLSYGGSSLLISLFAVGIL.

Belongs to the SEDS family. FtsW subfamily.

It is found in the cell inner membrane. It catalyses the reaction [GlcNAc-(1-&gt;4)-Mur2Ac(oyl-L-Ala-gamma-D-Glu-L-Lys-D-Ala-D-Ala)](n)-di-trans,octa-cis-undecaprenyl diphosphate + beta-D-GlcNAc-(1-&gt;4)-Mur2Ac(oyl-L-Ala-gamma-D-Glu-L-Lys-D-Ala-D-Ala)-di-trans,octa-cis-undecaprenyl diphosphate = [GlcNAc-(1-&gt;4)-Mur2Ac(oyl-L-Ala-gamma-D-Glu-L-Lys-D-Ala-D-Ala)](n+1)-di-trans,octa-cis-undecaprenyl diphosphate + di-trans,octa-cis-undecaprenyl diphosphate + H(+). It participates in cell wall biogenesis; peptidoglycan biosynthesis. Functionally, peptidoglycan polymerase that is essential for cell division. In Trichlorobacter lovleyi (strain ATCC BAA-1151 / DSM 17278 / SZ) (Geobacter lovleyi), this protein is Probable peptidoglycan glycosyltransferase FtsW.